Here is a 395-residue protein sequence, read N- to C-terminus: Torsin-3A (395 aa).

Residues 1–24 form the signal peptide; that stretch reads MFFGAFWLLLLLLLPPLRPPGAQG. N-linked (GlcNAc...) asparagine glycosylation occurs at Asn-120. 165–172 is an ATP binding site; that stretch reads GWSGTGKN.

It belongs to the ClpA/ClpB family. Torsin subfamily. May not form homohexamers. Post-translationally, N-glycosylated.

The protein localises to the cytoplasm. It localises to the endoplasmic reticulum lumen. The chain is Torsin-3A (Tor3a) from Rattus norvegicus (Rat).